The primary structure comprises 332 residues: Anthranilate phosphoribosyltransferase (332 aa).

Residues G79, G82–D83, S87, N89–T92, K107–S115, and S119 each bind 5-phospho-alpha-D-ribose 1-diphosphate. G79 provides a ligand contact to anthranilate. A Mg(2+)-binding site is contributed by S91. N110 serves as a coordination point for anthranilate. Residue R165 participates in anthranilate binding. The Mg(2+) site is built by D223 and E224.

This sequence belongs to the anthranilate phosphoribosyltransferase family. In terms of assembly, homodimer. Requires Mg(2+) as cofactor.

It carries out the reaction N-(5-phospho-beta-D-ribosyl)anthranilate + diphosphate = 5-phospho-alpha-D-ribose 1-diphosphate + anthranilate. It participates in amino-acid biosynthesis; L-tryptophan biosynthesis; L-tryptophan from chorismate: step 2/5. In terms of biological role, catalyzes the transfer of the phosphoribosyl group of 5-phosphorylribose-1-pyrophosphate (PRPP) to anthranilate to yield N-(5'-phosphoribosyl)-anthranilate (PRA). This Erwinia tasmaniensis (strain DSM 17950 / CFBP 7177 / CIP 109463 / NCPPB 4357 / Et1/99) protein is Anthranilate phosphoribosyltransferase.